A 129-amino-acid chain; its full sequence is Iron-sulfur cluster assembly 1 homolog, mitochondrial (129 aa).

The N-terminal 12 residues, 1-12, are a transit peptide targeting the mitochondrion; that stretch reads MASSVVRATVRA. Positions 57, 121, and 123 each coordinate Fe cation.

This sequence belongs to the HesB/IscA family.

It is found in the mitochondrion. Its function is as follows. Involved in the maturation of mitochondrial 4Fe-4S proteins functioning late in the iron-sulfur cluster assembly pathway. Probably involved in the binding of an intermediate of Fe/S cluster assembly. The chain is Iron-sulfur cluster assembly 1 homolog, mitochondrial (ISCA1) from Gallus gallus (Chicken).